The following is a 321-amino-acid chain: Thioredoxin reductase tcpT (321 aa).

FAD contacts are provided by residues 14–17 (GGPA), 36–41 (DSGRYR), His49, and Ala114. A disulfide bridge connects residues Cys138 and Cys141. FAD is bound by residues Asp282 and 289–290 (NV).

This sequence belongs to the class-II pyridine nucleotide-disulfide oxidoreductase family. Homodimer. It depends on FAD as a cofactor.

The protein operates within secondary metabolite biosynthesis. Functionally, thioredoxin reductase; part of the gene cluster that mediates the biosynthesis of an unusual class of epipolythiodioxopiperazines (ETPs) lacking the reactive thiol group important for toxicity. Firstly, L-tyrosine is prenylated by tcpD, before undergoing condensation with L-glycine in a reaction catalyzed by the NRPS tcpP leading to the diketopiperazine (DKP) backbone. Afterwards the alpha-carbon of tyrosine is oxidized by the cytochrome P450 tcpC to form a hydroxyl group. However, in contrast other ETP biosynthesis pathways studied so far, tcpC is not able to bishydroxylate the DKP at both alpha-carbon positions, but hydroxylates the alpha-carbon of the tyrosine part and the nitrogen of the glycine part. The next steps involve an alpha,beta-elimination reaction catalyzed by tcpI, a methylation by the methyltransferase tcpN the action of the four enzyme cascade tcpG/K/J/I. Due to a dysfunctional cytochrome P450 monooxygenase tcpC, the pathway leads to the biosynthesis of probable non-toxic metabolites lacking the reactive thiol group. This is Thioredoxin reductase tcpT from Claviceps purpurea (strain 20.1) (Ergot fungus).